Reading from the N-terminus, the 290-residue chain is Barley B recombinant-like protein C (290 aa).

Disordered regions lie at residues 60–90 (PHHH…YGMM) and 102–183 (QPEP…RKNI). The segment covering 104 to 116 (EPQPQLQHPPSPP) has biased composition (pro residues). Residues 138-158 (PPKKRQQGRQPKVLRPKKPKK) are compositionally biased toward basic residues.

The protein belongs to the BBR/BPC family.

It is found in the nucleus. Transcriptional regulator that specifically binds to GA-rich elements (GAGA-repeats) present in regulatory sequences of genes involved in developmental processes. The sequence is that of Barley B recombinant-like protein C from Oryza sativa subsp. japonica (Rice).